The following is a 498-amino-acid chain: UDP-N-acetylmuramate--L-alanine ligase (498 aa).

133–139 (GSSGKTT) contacts ATP.

It belongs to the MurCDEF family.

Its subcellular location is the cytoplasm. It catalyses the reaction UDP-N-acetyl-alpha-D-muramate + L-alanine + ATP = UDP-N-acetyl-alpha-D-muramoyl-L-alanine + ADP + phosphate + H(+). The protein operates within cell wall biogenesis; peptidoglycan biosynthesis. Its function is as follows. Cell wall formation. The chain is UDP-N-acetylmuramate--L-alanine ligase from Wolbachia pipientis wMel.